We begin with the raw amino-acid sequence, 305 residues long: UPF0282 protein Tneu_0934 (305 aa).

The protein belongs to the UPF0282 family.

This Pyrobaculum neutrophilum (strain DSM 2338 / JCM 9278 / NBRC 100436 / V24Sta) (Thermoproteus neutrophilus) protein is UPF0282 protein Tneu_0934.